An 842-amino-acid polypeptide reads, in one-letter code: Glycogen phosphorylase, muscle form (842 aa).

The residue at position 2 (serine 2) is an N-acetylserine. The residue at position 15 (serine 15) is a Phosphoserine; by PHK; in form phosphorylase A. The AMP site is built by aspartate 43 and tyrosine 76. 2 positions are modified to phosphotyrosine: tyrosine 204 and tyrosine 227. An AMP-binding site is contributed by 310–319 (RRFKSSKFGS). Residue serine 430 is modified to Phosphoserine. Tyrosine 473 is subject to Phosphotyrosine. At serine 514 the chain carries Phosphoserine. Lysine 681 bears the N6-(pyridoxal phosphate)lysine mark. Serine 747 and serine 748 each carry phosphoserine.

It belongs to the glycogen phosphorylase family. In terms of assembly, homodimer. Homotetramer; to form the enzymatically active phosphorylase A. The cofactor is pyridoxal 5'-phosphate. Post-translationally, phosphorylation of Ser-15 converts phosphorylase B (unphosphorylated) to phosphorylase A.

It carries out the reaction [(1-&gt;4)-alpha-D-glucosyl](n) + phosphate = [(1-&gt;4)-alpha-D-glucosyl](n-1) + alpha-D-glucose 1-phosphate. With respect to regulation, allosterically regulated through the non-covalent binding of metabolites, being activated by AMP and inhibited by ATP, ADP, and glucose-6-phosphate. The activity is also controlled by post-translational modifications including phosphorylation. Its function is as follows. Allosteric enzyme that catalyzes the rate-limiting step in glycogen catabolism, the phosphorolytic cleavage of glycogen to produce glucose-1-phosphate, and plays a central role in maintaining cellular and organismal glucose homeostasis. This chain is Glycogen phosphorylase, muscle form, found in Mus musculus (Mouse).